Consider the following 208-residue polypeptide: Small ribosomal subunit protein uS5 (208 aa).

The S5 DRBM domain occupies 28–91 (LEERLIYANR…EKAKKNVIRV (64 aa)).

This sequence belongs to the universal ribosomal protein uS5 family. Part of the 30S ribosomal subunit. Contacts proteins S4 and S8.

In terms of biological role, with S4 and S12 plays an important role in translational accuracy. Its function is as follows. Located at the back of the 30S subunit body where it stabilizes the conformation of the head with respect to the body. The chain is Small ribosomal subunit protein uS5 from Aquifex aeolicus (strain VF5).